Here is a 118-residue protein sequence, read N- to C-terminus: Small ribosomal subunit protein uS13 (118 aa).

Residues G94–K118 form a disordered region.

Belongs to the universal ribosomal protein uS13 family. As to quaternary structure, part of the 30S ribosomal subunit. Forms a loose heterodimer with protein S19. Forms two bridges to the 50S subunit in the 70S ribosome.

In terms of biological role, located at the top of the head of the 30S subunit, it contacts several helices of the 16S rRNA. In the 70S ribosome it contacts the 23S rRNA (bridge B1a) and protein L5 of the 50S subunit (bridge B1b), connecting the 2 subunits; these bridges are implicated in subunit movement. Contacts the tRNAs in the A and P-sites. The protein is Small ribosomal subunit protein uS13 of Xanthomonas axonopodis pv. citri (strain 306).